The chain runs to 449 residues: Mannan endo-1,6-alpha-mannosidase DCW1 (449 aa).

Residues 1 to 21 (MLVNKVIGLLGVLFATRFTNA) form the signal peptide. N-linked (GlcNAc...) asparagine glycans are attached at residues asparagine 34, asparagine 84, asparagine 109, asparagine 133, asparagine 203, asparagine 225, asparagine 240, asparagine 265, asparagine 281, asparagine 337, asparagine 362, and asparagine 420. The GPI-anchor amidated glycine moiety is linked to residue glycine 428. The propeptide at 429–449 (AGIITAVIGISIVACALWLVF) is removed in mature form.

Belongs to the glycosyl hydrolase 76 family.

The protein localises to the cell membrane. It catalyses the reaction Random hydrolysis of (1-&gt;6)-alpha-D-mannosidic linkages in unbranched (1-&gt;6)-mannans.. In terms of biological role, required for normal synthesis of the cell wall. The sequence is that of Mannan endo-1,6-alpha-mannosidase DCW1 (DCW1) from Saccharomyces cerevisiae (strain ATCC 204508 / S288c) (Baker's yeast).